The following is a 369-amino-acid chain: Protein-glutamate methylesterase/protein-glutamine glutaminase 1 (369 aa).

The Response regulatory domain occupies 3–120 (KVVVVDDSAF…SLDIVKIEKD (118 aa)). Asp-54 is modified (4-aspartylphosphate). Residues 136-168 (RSFRPAPAVRPAAPAALRATPRPSAAPSSAASS) show a composition bias toward low complexity. The tract at residues 136–174 (RSFRPAPAVRPAAPAALRATPRPSAAPSSAASSTGTLQV) is disordered. Residues 177–369 (GKPVRDVVAI…AQAIMNAVYK (193 aa)) form the CheB-type methylesterase domain. Active-site residues include Ser-189, His-216, and Asp-312.

This sequence belongs to the CheB family. In terms of processing, phosphorylated by CheA. Phosphorylation of the N-terminal regulatory domain activates the methylesterase activity.

Its subcellular location is the cytoplasm. The catalysed reaction is [protein]-L-glutamate 5-O-methyl ester + H2O = L-glutamyl-[protein] + methanol + H(+). It carries out the reaction L-glutaminyl-[protein] + H2O = L-glutamyl-[protein] + NH4(+). In terms of biological role, involved in chemotaxis. Part of a chemotaxis signal transduction system that modulates chemotaxis in response to various stimuli. Catalyzes the demethylation of specific methylglutamate residues introduced into the chemoreceptors (methyl-accepting chemotaxis proteins or MCP) by CheR. Also mediates the irreversible deamidation of specific glutamine residues to glutamic acid. This Oleidesulfovibrio alaskensis (strain ATCC BAA-1058 / DSM 17464 / G20) (Desulfovibrio alaskensis) protein is Protein-glutamate methylesterase/protein-glutamine glutaminase 1.